The sequence spans 451 residues: Histidinol dehydrogenase (451 aa).

A disordered region spans residues 1–20 (MLNVTDLRGHTPSKSDIRRA). Residues 7-19 (LRGHTPSKSDIRR) show a composition bias toward basic and acidic residues. Residues Tyr-129, Gln-193, and Asn-218 each coordinate NAD(+). The substrate site is built by Thr-241, Gln-263, and His-266. Gln-263 and His-266 together coordinate Zn(2+). Catalysis depends on proton acceptor residues Glu-332 and His-333. Positions 333, 366, 420, and 425 each coordinate substrate. Zn(2+) is bound at residue Asp-366. His-425 is a binding site for Zn(2+).

It belongs to the histidinol dehydrogenase family. Requires Zn(2+) as cofactor.

The catalysed reaction is L-histidinol + 2 NAD(+) + H2O = L-histidine + 2 NADH + 3 H(+). It functions in the pathway amino-acid biosynthesis; L-histidine biosynthesis; L-histidine from 5-phospho-alpha-D-ribose 1-diphosphate: step 9/9. Its function is as follows. Catalyzes the sequential NAD-dependent oxidations of L-histidinol to L-histidinaldehyde and then to L-histidine. This Corynebacterium efficiens (strain DSM 44549 / YS-314 / AJ 12310 / JCM 11189 / NBRC 100395) protein is Histidinol dehydrogenase.